The following is a 255-amino-acid chain: 3-oxo-5-alpha-steroid 4-dehydrogenase 1 (255 aa).

Helical transmembrane passes span 6–26 (LCLL…AFVG), 82–102 (VLLA…PVLI), 107–127 (PTLL…GYLQ), 142–162 (VTHP…VINI), and 205–225 (FALA…LCAL).

The protein belongs to the steroid 5-alpha reductase family.

The protein resides in the microsome membrane. The protein localises to the endoplasmic reticulum membrane. The enzyme catalyses a 3-oxo-5alpha-steroid + NADP(+) = a 3-oxo-Delta(4)-steroid + NADPH + H(+). It carries out the reaction 5alpha-pregnane-3,20-dione + NADP(+) = progesterone + NADPH + H(+). It catalyses the reaction 17beta-hydroxy-5alpha-androstan-3-one + NADP(+) = testosterone + NADPH + H(+). The catalysed reaction is androst-4-ene-3,17-dione + NADPH + H(+) = 5alpha-androstan-3,17-dione + NADP(+). Its function is as follows. Converts testosterone into 5-alpha-dihydrotestosterone and progesterone or corticosterone into their corresponding 5-alpha-3-oxosteroids. It plays a central role in sexual differentiation and androgen physiology. This Mus musculus (Mouse) protein is 3-oxo-5-alpha-steroid 4-dehydrogenase 1.